The following is a 461-amino-acid chain: Photosystem II CP43 reaction center protein (461 aa).

A propeptide spanning residues 1–2 (ME) is cleaved from the precursor. The residue at position 3 (Thr-3) is an N-acetylthreonine. Phosphothreonine is present on Thr-3. Transmembrane regions (helical) follow at residues 57-81 (LFEV…PHLA), 122-143 (LIGP…KDKN), 166-188 (KAMY…RIIT), 243-263 (TPWP…LSYS), and 279-300 (WFNN…ASQS). Glu-355 is a binding site for [CaMn4O5] cluster. A helical membrane pass occupies residues 435–459 (RARAAAAGFEKGIDRLDEPVLSMRP).

The protein belongs to the PsbB/PsbC family. PsbC subfamily. As to quaternary structure, PSII is composed of 1 copy each of membrane proteins PsbA, PsbB, PsbC, PsbD, PsbE, PsbF, PsbH, PsbI, PsbJ, PsbK, PsbL, PsbM, PsbT, PsbX, PsbY, PsbZ, Psb30/Ycf12, at least 3 peripheral proteins of the oxygen-evolving complex and a large number of cofactors. It forms dimeric complexes. Binds multiple chlorophylls and provides some of the ligands for the Ca-4Mn-5O cluster of the oxygen-evolving complex. It may also provide a ligand for a Cl- that is required for oxygen evolution. PSII binds additional chlorophylls, carotenoids and specific lipids. is required as a cofactor.

Its subcellular location is the plastid. The protein localises to the chloroplast thylakoid membrane. Its function is as follows. One of the components of the core complex of photosystem II (PSII). It binds chlorophyll and helps catalyze the primary light-induced photochemical processes of PSII. PSII is a light-driven water:plastoquinone oxidoreductase, using light energy to abstract electrons from H(2)O, generating O(2) and a proton gradient subsequently used for ATP formation. This Tetradesmus obliquus (Green alga) protein is Photosystem II CP43 reaction center protein.